The sequence spans 143 residues: Ribonuclease P protein component 2 (143 aa).

The protein belongs to the eukaryotic/archaeal RNase P protein component 2 family. In terms of assembly, consists of a catalytic RNA component and at least 4-5 protein subunits.

The protein localises to the cytoplasm. It catalyses the reaction Endonucleolytic cleavage of RNA, removing 5'-extranucleotides from tRNA precursor.. Its function is as follows. Part of ribonuclease P, a protein complex that generates mature tRNA molecules by cleaving their 5'-ends. The polypeptide is Ribonuclease P protein component 2 (Saccharolobus islandicus (strain L.S.2.15 / Lassen #1) (Sulfolobus islandicus)).